Consider the following 134-residue polypeptide: Profilin-3 (134 aa).

An intrachain disulfide couples Cys-13 to Cys-118. An Involved in PIP2 interaction motif is present at residues 84 to 100; the sequence is AVIRGKKGSGGITIKKT. Phosphothreonine is present on Thr-114.

The protein belongs to the profilin family. Occurs in many kinds of cells as a complex with monomeric actin in a 1:1 ratio. Phosphorylated by MAP kinases.

It localises to the cytoplasm. It is found in the cytoskeleton. Its function is as follows. Binds to actin and affects the structure of the cytoskeleton. At high concentrations, profilin prevents the polymerization of actin, whereas it enhances it at low concentrations. This chain is Profilin-3, found in Olea europaea (Common olive).